Reading from the N-terminus, the 1198-residue chain is Phosphatidylinositol-3,5-bisphosphate 3-phosphatase MTMR3 (1198 aa).

Ser-8 carries the phosphoserine modification. Residues 155 to 576 (EHVTSRFKNE…RNLMLWSAVY (422 aa)) form the Myotubularin phosphatase domain. Positions 265–280 (SRSSGSKLSTRNTSRD) are enriched in polar residues. Positions 265–285 (SRSSGSKLSTRNTSRDFPNGG) are disordered. Positions 326, 351, and 352 each coordinate a 1,2-diacyl-sn-glycero-3-phospho-(1D-myo-inositol-3,5-bisphosphate). Positions 326, 351, and 352 each coordinate a 1,2-diacyl-sn-glycero-3-phospho-(1D-myo-inositol-3-phosphate). Cys-413 (phosphocysteine intermediate) is an active-site residue. 8 residues coordinate a 1,2-diacyl-sn-glycero-3-phospho-(1D-myo-inositol-3,5-bisphosphate): Ser-414, Asp-415, Gly-416, Trp-417, Asp-418, Arg-419, Lys-455, and Arg-459. 6 residues coordinate a 1,2-diacyl-sn-glycero-3-phospho-(1D-myo-inositol-3-phosphate): Ser-414, Asp-415, Gly-416, Trp-417, Asp-418, and Arg-419. Residue Arg-459 participates in a 1,2-diacyl-sn-glycero-3-phospho-(1D-myo-inositol-3-phosphate) binding. A disordered region spans residues 590–612 (CAPYPAPGTSPDDPPLSRLPKTR). The segment covering 593-603 (YPAPGTSPDDP) has biased composition (pro residues). Ser-613, Ser-633, Ser-647, and Ser-651 each carry phosphoserine. Disordered regions lie at residues 650–669 (LSSL…LGKP), 716–735 (EGKE…PEAS), and 855–891 (KSVS…SLVE). The segment covering 716–732 (EGKEDPLLEKESRRKTP) has biased composition (basic and acidic residues). Thr-731 carries the phosphothreonine modification. Residues Ser-906 and Ser-909 each carry the phosphoserine modification. Disordered stretches follow at residues 933–974 (ETEN…SRQL) and 993–1019 (WLHS…DDDG). Residues 999–1010 (GRPSATSSPDQP) are compositionally biased toward polar residues. A coiled-coil region spans residues 1029–1062 (QRLRQIESGHQQEVETLKKQVQELKSRLESQYLT). Ser-1064 is subject to Phosphoserine. Residues 1119–1179 (DHLAAHCYAC…VCKSCYSSLH (61 aa)) form an FYVE-type zinc finger. 8 residues coordinate Zn(2+): Cys-1125, Cys-1128, Cys-1141, Cys-1144, Cys-1149, Cys-1152, Cys-1171, and Cys-1174.

Belongs to the protein-tyrosine phosphatase family. Non-receptor class myotubularin subfamily. As to quaternary structure, forms heterodimers with MTMR4 that recruit both CEP55 and PLK1; occurs during early mitosis, regulates the phosphorylation of CEP55 by PLK1 and its recruitment to the midbody where it mediates cell abscission. Phosphorylated by CDK1 during mitosis.

Its subcellular location is the cytoplasm. The protein localises to the cytosol. It localises to the membrane. The catalysed reaction is a 1,2-diacyl-sn-glycero-3-phospho-(1D-myo-inositol-3,5-bisphosphate) + H2O = a 1,2-diacyl-sn-glycero-3-phospho-(1D-myo-inositol-5-phosphate) + phosphate. The enzyme catalyses a 1,2-diacyl-sn-glycero-3-phospho-(1D-myo-inositol-3-phosphate) + H2O = a 1,2-diacyl-sn-glycero-3-phospho-(1D-myo-inositol) + phosphate. It carries out the reaction 1,2-dihexadecanoyl-sn-glycero-3-phospho-(1D-myo-inositol-3-phosphate) + H2O = 1,2-dihexadecanoyl-sn-glycero-3-phospho-(1D-myo-inositol) + phosphate. It catalyses the reaction 1,2-dioctanoyl-sn-glycero-3-phospho-(1-D-myo-inositol-3-phosphate) + H2O = 1,2-dioctanoyl-sn-glycero-3-phospho-(1D-myo-inositol) + phosphate. The catalysed reaction is 1,2-dihexadecanoyl-sn-glycero-3-phospho-(1D-myo-inositol-3,5-phosphate) + H2O = 1,2-dihexadecanoyl-sn-glycero-3-phospho-(1D-myo-inositol-5-phosphate) + phosphate. In terms of biological role, lipid phosphatase that specifically dephosphorylates the D-3 position of phosphatidylinositol 3-phosphate and phosphatidylinositol 3,5-bisphosphate, generating phosphatidylinositol and phosphatidylinositol 5-phosphate. Decreases the levels of phosphatidylinositol 3-phosphate, a phospholipid found in cell membranes where it acts as key regulator of both cell signaling and intracellular membrane traffic. Could also have a molecular sequestering/adapter activity and regulate biological processes independently of its phosphatase activity. It includes the regulation of midbody abscission during mitotic cytokinesis. This chain is Phosphatidylinositol-3,5-bisphosphate 3-phosphatase MTMR3, found in Homo sapiens (Human).